Here is a 473-residue protein sequence, read N- to C-terminus: ATP synthase subunit beta (473 aa).

Residue 158 to 165 coordinates ATP; it reads GGAGVGKT.

This sequence belongs to the ATPase alpha/beta chains family. As to quaternary structure, F-type ATPases have 2 components, CF(1) - the catalytic core - and CF(0) - the membrane proton channel. CF(1) has five subunits: alpha(3), beta(3), gamma(1), delta(1), epsilon(1). CF(0) has three main subunits: a(1), b(2) and c(9-12). The alpha and beta chains form an alternating ring which encloses part of the gamma chain. CF(1) is attached to CF(0) by a central stalk formed by the gamma and epsilon chains, while a peripheral stalk is formed by the delta and b chains.

It is found in the cell membrane. It carries out the reaction ATP + H2O + 4 H(+)(in) = ADP + phosphate + 5 H(+)(out). In terms of biological role, produces ATP from ADP in the presence of a proton gradient across the membrane. The catalytic sites are hosted primarily by the beta subunits. This chain is ATP synthase subunit beta, found in Carboxydothermus hydrogenoformans (strain ATCC BAA-161 / DSM 6008 / Z-2901).